Reading from the N-terminus, the 75-residue chain is MNFATKVSLLLLAIAVIVIVEGGEGDSWFEEHEESDTERDFPLSKEYESCVRPRKCKPPLKCNKAQICVDPNKGW.

The first 25 residues, 1–25 (MNFATKVSLLLLAIAVIVIVEGGEG), serve as a signal peptide directing secretion. Residues 26-39 (DSWFEEHEESDTER) constitute a propeptide that is removed on maturation. Cystine bridges form between C50–C62 and C56–C68.

As to expression, expressed by the venom gland.

It localises to the secreted. Functionally, affects the activity of both ryanodine-sensitive calcium-release channels RyR1 and RyR2 with high potency. At lower concentrations the toxin increases full openings of the RyRs, and at higher concentrations it inhibits full openings and induce openings to subconductance levels and reduces the number of full conductance openings. The different actions may be attributed to the toxins binding at different sites on the RyRs, with binding at a high-affinity site mediating the increase in full openings and the induction of subconductance states evoked upon binding to a lower-affinity site. Insect-selective toxin that provokes a dose-dependent contractile paralysis in crickets and blowfly larvae, followed by death. The sequence is that of Phi-liotoxin-Lw1a from Hormurus waigiensis (Australian rainforest scorpion).